The following is a 78-amino-acid chain: Acyl carrier protein (78 aa).

Residues 2-77 form the Carrier domain; sequence STIEERVKKI…AAIDYVNSHQ (76 aa). The residue at position 37 (S37) is an O-(pantetheine 4'-phosphoryl)serine.

The protein belongs to the acyl carrier protein (ACP) family. Post-translationally, 4'-phosphopantetheine is transferred from CoA to a specific serine of apo-ACP by AcpS. This modification is essential for activity because fatty acids are bound in thioester linkage to the sulfhydryl of the prosthetic group.

It is found in the cytoplasm. It functions in the pathway lipid metabolism; fatty acid biosynthesis. Its function is as follows. Carrier of the growing fatty acid chain in fatty acid biosynthesis. This Pseudomonas putida (strain W619) protein is Acyl carrier protein.